The following is a 418-amino-acid chain: Serine--tRNA ligase (418 aa).

226–228 (TSE) contributes to the L-serine binding site. Residues 257–259 (RRE) and Val-273 each bind ATP. Residue Glu-280 coordinates L-serine. 344–347 (ELTS) lines the ATP pocket. Position 379 (Thr-379) interacts with L-serine.

The protein belongs to the class-II aminoacyl-tRNA synthetase family. Type-1 seryl-tRNA synthetase subfamily. As to quaternary structure, homodimer. The tRNA molecule binds across the dimer.

The protein resides in the cytoplasm. The enzyme catalyses tRNA(Ser) + L-serine + ATP = L-seryl-tRNA(Ser) + AMP + diphosphate + H(+). The catalysed reaction is tRNA(Sec) + L-serine + ATP = L-seryl-tRNA(Sec) + AMP + diphosphate + H(+). It participates in aminoacyl-tRNA biosynthesis; selenocysteinyl-tRNA(Sec) biosynthesis; L-seryl-tRNA(Sec) from L-serine and tRNA(Sec): step 1/1. In terms of biological role, catalyzes the attachment of serine to tRNA(Ser). Is also able to aminoacylate tRNA(Sec) with serine, to form the misacylated tRNA L-seryl-tRNA(Sec), which will be further converted into selenocysteinyl-tRNA(Sec). The protein is Serine--tRNA ligase of Mycobacteroides abscessus (strain ATCC 19977 / DSM 44196 / CCUG 20993 / CIP 104536 / JCM 13569 / NCTC 13031 / TMC 1543 / L948) (Mycobacterium abscessus).